A 409-amino-acid polypeptide reads, in one-letter code: Type II methyltransferase M.BsuFI (409 aa).

Positions 101–402 constitute an SAM-dependent MTase C5-type domain; the sequence is LTFIDLFAGI…GAMKERLLLA (302 aa). Cys170 is an active-site residue.

The protein belongs to the class I-like SAM-binding methyltransferase superfamily. C5-methyltransferase family.

It catalyses the reaction a 2'-deoxycytidine in DNA + S-adenosyl-L-methionine = a 5-methyl-2'-deoxycytidine in DNA + S-adenosyl-L-homocysteine + H(+). A methylase, recognizes the double-stranded sequence 5'-CCGG-3', methylates C-1 on both strands, and protects the DNA from cleavage by the BsuFI endonuclease. The polypeptide is Type II methyltransferase M.BsuFI (hsdFM) (Bacillus subtilis).